The primary structure comprises 135 residues: ATP synthase epsilon chain (135 aa).

The interval 91–122 (EAQKQLSEAEQAWSKFDGQPNSPDKIKAQQAF) is disordered.

The protein belongs to the ATPase epsilon chain family. F-type ATPases have 2 components, CF(1) - the catalytic core - and CF(0) - the membrane proton channel. CF(1) has five subunits: alpha(3), beta(3), gamma(1), delta(1), epsilon(1). CF(0) has three main subunits: a, b and c.

Its subcellular location is the cellular thylakoid membrane. Functionally, produces ATP from ADP in the presence of a proton gradient across the membrane. The protein is ATP synthase epsilon chain of Synechococcus sp. (strain RCC307).